A 563-amino-acid chain; its full sequence is MDKITVEVIKSSTSYIAEEMGIILRNTAYSPNIKDRLDFSCAILSSNGELIAQAEHIPVHLGSMAIGVKNTVDYLKKESIEIEKDDVIIVNDPYIAGTHLNDITLLKPIFYNDEIIGYVANKAHHVDVGGYAPGSISSNVKELYHEGLIIPPSKLVINGKLNKELLNLITSNVRVPKSTIGDLKAQIASLNIGVERILKLIEKYGDREVTEAWNKSLDYSEEYLKSKIRDINCICEAVDYLEYKDKLININMKIEIKNGKIKVDFTGTHRQLDAPLNAVYGVTVASTSFALKAVIDPDLPMNHGIFRVLNIIAPEETIVNPKKPAPVSVGNVETSQRIVDVIFKALYHEFPDRVPAASNGSMNNVIIGGRGWAFYETIGGGFGGRNGKDGVDGVHANMTNTLNTPIEVIENEYPIMILEYSLREDSGGAGKYRGGLGIRRVYKMLSDCMLSIIADRIKISPWGVNNGYSGACGEHYVIKDGKKIPLSGKDTLYLSCGDIVEINTPGGGGYGSPYERDINLILEDVKDEKISIKSAYRDYKVKIIKKDDDFVVDMEETKKLRGL.

It belongs to the HyuB family.

This is an uncharacterized protein from Methanocaldococcus jannaschii (strain ATCC 43067 / DSM 2661 / JAL-1 / JCM 10045 / NBRC 100440) (Methanococcus jannaschii).